Reading from the N-terminus, the 356-residue chain is Zinc finger protein 830 (356 aa).

The stretch at 11–33 (AQEELRKLMKAKQRESSSKKRIE) forms a coiled coil. A C2H2-type zinc finger spans residues 47 to 69 (CVVCNSLIKSELLWPAHILGKQH). The segment at 71 to 195 (EKVAELKGTK…PTSSADNLPA (125 aa)) is disordered. The segment covering 80–90 (KATTSSPSNTI) has biased composition (polar residues). 2 stretches are compositionally biased toward basic and acidic residues: residues 99–118 (KGSEPEKQESKRTKGSEDHP) and 125–135 (LPEEFFEKEKT). Acidic residues predominate over residues 150 to 165 (DYEDVDDDDAEEGEEY). The stretch at 278–322 (AEEDEEGRLDRQIDEIDEQIQCYRRVEHLRDRKDTLQDAKMEVLK) forms a coiled coil.

It localises to the nucleus. Its subcellular location is the chromosome. It is found in the nucleus speckle. May act as an important regulator of the cell cycle that participates in the maintenance of genome integrity. The chain is Zinc finger protein 830 from Xenopus laevis (African clawed frog).